Reading from the N-terminus, the 141-residue chain is VLSSKDKANIKTAFGKIGGHAADYGAEALERMFLGFPTTKTYFPHFDLSHGSAQVKAHGKKVGDALTKAADHLDDLPSALSALSDLHAHKLRVDPVNFKLLSHCLLVTVAAHHPGDFTPAVDASLDKFLANVSTVLTSKYR.

The Globin domain occupies 1–141 (VLSSKDKANI…VSTVLTSKYR (141 aa)). At serine 3 the chain carries Phosphoserine. 2 positions are modified to N6-succinyllysine: lysine 7 and lysine 11. Position 16 is an N6-acetyllysine; alternate (lysine 16). Lysine 16 is modified (N6-succinyllysine; alternate). The residue at position 24 (tyrosine 24) is a Phosphotyrosine. N6-succinyllysine is present on lysine 40. Serine 49 is subject to Phosphoserine. Residue histidine 58 participates in O2 binding. Histidine 87 serves as a coordination point for heme b. Serine 102 carries the post-translational modification Phosphoserine. Threonine 108 carries the post-translational modification Phosphothreonine. Serine 124 bears the Phosphoserine mark. Phosphothreonine is present on residues threonine 134 and threonine 137. The residue at position 138 (serine 138) is a Phosphoserine.

It belongs to the globin family. In terms of assembly, heterotetramer of two alpha chains and two beta chains. As to expression, red blood cells.

In terms of biological role, involved in oxygen transport from the lung to the various peripheral tissues. Functionally, hemopressin acts as an antagonist peptide of the cannabinoid receptor CNR1. Hemopressin-binding efficiently blocks cannabinoid receptor CNR1 and subsequent signaling. The polypeptide is Hemoglobin subunit alpha (HBA) (Lama glama (Llama)).